We begin with the raw amino-acid sequence, 433 residues long: 3-phosphoshikimate 1-carboxyvinyltransferase (433 aa).

The 3-phosphoshikimate site is built by K22, S23, and R27. K22 serves as a coordination point for phosphoenolpyruvate. Phosphoenolpyruvate contacts are provided by G95 and R123. 3-phosphoshikimate-binding residues include S166, Q168, D314, and K341. Residue Q168 coordinates phosphoenolpyruvate. D314 (proton acceptor) is an active-site residue. The phosphoenolpyruvate site is built by R345 and R386.

It belongs to the EPSP synthase family. As to quaternary structure, monomer.

The protein resides in the cytoplasm. The catalysed reaction is 3-phosphoshikimate + phosphoenolpyruvate = 5-O-(1-carboxyvinyl)-3-phosphoshikimate + phosphate. Its pathway is metabolic intermediate biosynthesis; chorismate biosynthesis; chorismate from D-erythrose 4-phosphate and phosphoenolpyruvate: step 6/7. Catalyzes the transfer of the enolpyruvyl moiety of phosphoenolpyruvate (PEP) to the 5-hydroxyl of shikimate-3-phosphate (S3P) to produce enolpyruvyl shikimate-3-phosphate and inorganic phosphate. The polypeptide is 3-phosphoshikimate 1-carboxyvinyltransferase (Acidithiobacillus ferrooxidans (strain ATCC 23270 / DSM 14882 / CIP 104768 / NCIMB 8455) (Ferrobacillus ferrooxidans (strain ATCC 23270))).